Consider the following 202-residue polypeptide: Ribonuclease HII (202 aa).

Positions 14–202 (LPLAGVDEAG…VAQFSLFPAA (189 aa)) constitute an RNase H type-2 domain. A divalent metal cation contacts are provided by Asp20, Glu21, and Asp111.

This sequence belongs to the RNase HII family. Requires Mn(2+) as cofactor. The cofactor is Mg(2+).

The protein resides in the cytoplasm. It catalyses the reaction Endonucleolytic cleavage to 5'-phosphomonoester.. In terms of biological role, endonuclease that specifically degrades the RNA of RNA-DNA hybrids. This Rhizorhabdus wittichii (strain DSM 6014 / CCUG 31198 / JCM 15750 / NBRC 105917 / EY 4224 / RW1) (Sphingomonas wittichii) protein is Ribonuclease HII.